The primary structure comprises 280 residues: Ribosomal RNA-processing protein 7 homolog A (280 aa).

The span at 1-10 (MVSRRKKRKA) shows a compositional bias: basic residues. The tract at residues 1–24 (MVSRRKKRKAGGHEESIPSPPGYS) is disordered. Residues 59-159 (RTLFILNVPP…SGIHKWISDY (101 aa)) form the RRM domain. A Phosphoserine modification is found at serine 99.

The protein belongs to the RRP7 family. As to quaternary structure, part of the small subunit (SSU) processome, composed of more than 70 proteins and the RNA chaperone small nucleolar RNA (snoRNA) U3. Interacts with NOL6; required for NOL6 localization to nucleolus.

It localises to the nucleus. The protein resides in the nucleolus. It is found in the cell projection. The protein localises to the cilium. Its subcellular location is the cytoplasm. It localises to the cytoskeleton. The protein resides in the microtubule organizing center. It is found in the centrosome. Its function is as follows. Nucleolar protein that is involved in ribosomal RNA (rRNA) processing. Also plays a role in primary cilia resorption, and cell cycle progression in neurogenesis and neocortex development. Part of the small subunit (SSU) processome, first precursor of the small eukaryotic ribosomal subunit. During the assembly of the SSU processome in the nucleolus, many ribosome biogenesis factors, an RNA chaperone and ribosomal proteins associate with the nascent pre-rRNA and work in concert to generate RNA folding, modifications, rearrangements and cleavage as well as targeted degradation of pre-ribosomal RNA by the RNA exosome. This is Ribosomal RNA-processing protein 7 homolog A (Rrp7a) from Mus musculus (Mouse).